We begin with the raw amino-acid sequence, 82 residues long: uncharacterized protein (82 aa).

This is an uncharacterized protein from Lactococcus lactis subsp. lactis (Streptococcus lactis).